The primary structure comprises 141 residues: Large ribosomal subunit protein uL11 (141 aa).

This sequence belongs to the universal ribosomal protein uL11 family. In terms of assembly, part of the ribosomal stalk of the 50S ribosomal subunit. Interacts with L10 and the large rRNA to form the base of the stalk. L10 forms an elongated spine to which L12 dimers bind in a sequential fashion forming a multimeric L10(L12)X complex. One or more lysine residues are methylated.

Its function is as follows. Forms part of the ribosomal stalk which helps the ribosome interact with GTP-bound translation factors. The protein is Large ribosomal subunit protein uL11 of Roseiflexus sp. (strain RS-1).